Consider the following 576-residue polypeptide: Arginine--tRNA ligase (576 aa).

Residues 122–132 (PNVAKEMHVGH) carry the 'HIGH' region motif.

This sequence belongs to the class-I aminoacyl-tRNA synthetase family. Monomer.

Its subcellular location is the cytoplasm. The enzyme catalyses tRNA(Arg) + L-arginine + ATP = L-arginyl-tRNA(Arg) + AMP + diphosphate. The protein is Arginine--tRNA ligase of Sodalis glossinidius (strain morsitans).